We begin with the raw amino-acid sequence, 322 residues long: Anthranilate phosphoribosyltransferase (322 aa).

Residues Gly71, 74 to 75 (GD), Thr79, 81 to 84 (NVST), 99 to 107 (KFGNRSASG), and Ala111 contribute to the 5-phospho-alpha-D-ribose 1-diphosphate site. Gly71 is a binding site for anthranilate. Ser83 contacts Mg(2+). Anthranilate is bound at residue Asn102. Arg157 lines the anthranilate pocket. Positions 215 and 216 each coordinate Mg(2+).

The protein belongs to the anthranilate phosphoribosyltransferase family. In terms of assembly, homodimer. Requires Mg(2+) as cofactor.

The enzyme catalyses N-(5-phospho-beta-D-ribosyl)anthranilate + diphosphate = 5-phospho-alpha-D-ribose 1-diphosphate + anthranilate. The protein operates within amino-acid biosynthesis; L-tryptophan biosynthesis; L-tryptophan from chorismate: step 2/5. Functionally, catalyzes the transfer of the phosphoribosyl group of 5-phosphorylribose-1-pyrophosphate (PRPP) to anthranilate to yield N-(5'-phosphoribosyl)-anthranilate (PRA). The chain is Anthranilate phosphoribosyltransferase from Thermoplasma acidophilum (strain ATCC 25905 / DSM 1728 / JCM 9062 / NBRC 15155 / AMRC-C165).